The sequence spans 397 residues: Argininosuccinate synthase (397 aa).

9–17 (AYSGGLDTS) lines the ATP pocket. Y85 contacts L-citrulline. ATP is bound at residue G115. 3 residues coordinate L-aspartate: T117, N121, and D122. Position 121 (N121) interacts with L-citrulline. L-citrulline-binding residues include R125, S173, E258, and Y270.

Belongs to the argininosuccinate synthase family. Type 1 subfamily. Homotetramer.

The protein localises to the cytoplasm. The catalysed reaction is L-citrulline + L-aspartate + ATP = 2-(N(omega)-L-arginino)succinate + AMP + diphosphate + H(+). The protein operates within amino-acid biosynthesis; L-arginine biosynthesis; L-arginine from L-ornithine and carbamoyl phosphate: step 2/3. In Streptococcus suis (strain 05ZYH33), this protein is Argininosuccinate synthase.